A 56-amino-acid chain; its full sequence is Large ribosomal subunit protein bL32 (56 aa).

The interval 1–37 (MAVQQNKKSRSRRDMRRSHDALTTAAISVDKASGEKH) is disordered. The span at 7 to 16 (KKSRSRRDMR) shows a compositional bias: basic residues.

It belongs to the bacterial ribosomal protein bL32 family.

The sequence is that of Large ribosomal subunit protein bL32 (rpmF) from Pasteurella multocida (strain Pm70).